An 87-amino-acid chain; its full sequence is Small ribosomal subunit protein bS20 (87 aa).

The tract at residues 1 to 25 is disordered; that stretch reads MANIKSAKKRAVQSEKRRKHNASRR.

This sequence belongs to the bacterial ribosomal protein bS20 family.

Functionally, binds directly to 16S ribosomal RNA. The polypeptide is Small ribosomal subunit protein bS20 (Yersinia pseudotuberculosis serotype O:1b (strain IP 31758)).